Here is a 516-residue protein sequence, read N- to C-terminus: 2-isopropylmalate synthase (516 aa).

The Pyruvate carboxyltransferase domain maps to 5–267 (IIIFDTTLRD…STDINIKEIH (263 aa)). Mn(2+)-binding residues include Asp-14, His-202, His-204, and Asn-238. Positions 393–516 (KLEYFDVQSK…VNKELERLQK (124 aa)) are regulatory domain.

The protein belongs to the alpha-IPM synthase/homocitrate synthase family. LeuA type 1 subfamily. Homodimer. Mn(2+) serves as cofactor.

It localises to the cytoplasm. The catalysed reaction is 3-methyl-2-oxobutanoate + acetyl-CoA + H2O = (2S)-2-isopropylmalate + CoA + H(+). It participates in amino-acid biosynthesis; L-leucine biosynthesis; L-leucine from 3-methyl-2-oxobutanoate: step 1/4. In terms of biological role, catalyzes the condensation of the acetyl group of acetyl-CoA with 3-methyl-2-oxobutanoate (2-ketoisovalerate) to form 3-carboxy-3-hydroxy-4-methylpentanoate (2-isopropylmalate). This Buchnera aphidicola subsp. Cinara cedri (strain Cc) protein is 2-isopropylmalate synthase.